We begin with the raw amino-acid sequence, 141 residues long: ATP synthase epsilon chain (141 aa).

Belongs to the ATPase epsilon chain family. In terms of assembly, F-type ATPases have 2 components, CF(1) - the catalytic core - and CF(0) - the membrane proton channel. CF(1) has five subunits: alpha(3), beta(3), gamma(1), delta(1), epsilon(1). CF(0) has three main subunits: a, b and c.

The protein localises to the cell inner membrane. In terms of biological role, produces ATP from ADP in the presence of a proton gradient across the membrane. In Azoarcus sp. (strain BH72), this protein is ATP synthase epsilon chain.